The chain runs to 374 residues: Queuine tRNA-ribosyltransferase (374 aa).

Residue aspartate 89 is the Proton acceptor of the active site. Substrate contacts are provided by residues 89-93 (DSGGF), aspartate 143, glutamine 187, and glycine 214. Positions 245–251 (GVGKPED) are RNA binding. Aspartate 264 acts as the Nucleophile in catalysis. An RNA binding; important for wobble base 34 recognition region spans residues 269–273 (TRNAR). Residues cysteine 302, cysteine 304, cysteine 307, and histidine 333 each coordinate Zn(2+).

The protein belongs to the queuine tRNA-ribosyltransferase family. As to quaternary structure, homodimer. Within each dimer, one monomer is responsible for RNA recognition and catalysis, while the other monomer binds to the replacement base PreQ1. Zn(2+) serves as cofactor.

The catalysed reaction is 7-aminomethyl-7-carbaguanine + guanosine(34) in tRNA = 7-aminomethyl-7-carbaguanosine(34) in tRNA + guanine. It functions in the pathway tRNA modification; tRNA-queuosine biosynthesis. Its function is as follows. Catalyzes the base-exchange of a guanine (G) residue with the queuine precursor 7-aminomethyl-7-deazaguanine (PreQ1) at position 34 (anticodon wobble position) in tRNAs with GU(N) anticodons (tRNA-Asp, -Asn, -His and -Tyr). Catalysis occurs through a double-displacement mechanism. The nucleophile active site attacks the C1' of nucleotide 34 to detach the guanine base from the RNA, forming a covalent enzyme-RNA intermediate. The proton acceptor active site deprotonates the incoming PreQ1, allowing a nucleophilic attack on the C1' of the ribose to form the product. After dissociation, two additional enzymatic reactions on the tRNA convert PreQ1 to queuine (Q), resulting in the hypermodified nucleoside queuosine (7-(((4,5-cis-dihydroxy-2-cyclopenten-1-yl)amino)methyl)-7-deazaguanosine). In Shewanella baltica (strain OS185), this protein is Queuine tRNA-ribosyltransferase.